A 276-amino-acid chain; its full sequence is Large ribosomal subunit protein uL2 (276 aa).

Positions 224–276 are disordered; it reads VMNPVDHPHGGGEGKAPIGRKSPMTPWGKPTLGFKTRKKKNKSDKFIIRRRKK. Positions 258–276 are enriched in basic residues; it reads KTRKKKNKSDKFIIRRRKK.

The protein belongs to the universal ribosomal protein uL2 family. Part of the 50S ribosomal subunit. Forms a bridge to the 30S subunit in the 70S ribosome.

Functionally, one of the primary rRNA binding proteins. Required for association of the 30S and 50S subunits to form the 70S ribosome, for tRNA binding and peptide bond formation. It has been suggested to have peptidyltransferase activity; this is somewhat controversial. Makes several contacts with the 16S rRNA in the 70S ribosome. This is Large ribosomal subunit protein uL2 from Geobacillus sp. (strain WCH70).